The chain runs to 304 residues: Glycine--tRNA ligase alpha subunit (304 aa).

The protein belongs to the class-II aminoacyl-tRNA synthetase family. As to quaternary structure, tetramer of two alpha and two beta subunits.

Its subcellular location is the cytoplasm. It carries out the reaction tRNA(Gly) + glycine + ATP = glycyl-tRNA(Gly) + AMP + diphosphate. The polypeptide is Glycine--tRNA ligase alpha subunit (Yersinia pseudotuberculosis serotype O:1b (strain IP 31758)).